The chain runs to 470 residues: Cysteine--tRNA ligase (470 aa).

Cysteine 28 lines the Zn(2+) pocket. The short motif at 30-40 is the 'HIGH' region element; sequence PTVYNYIHIGN. 3 residues coordinate Zn(2+): cysteine 212, histidine 237, and glutamate 241. The 'KMSKS' region motif lies at 271–275; sequence KMSKS. Lysine 274 serves as a coordination point for ATP.

This sequence belongs to the class-I aminoacyl-tRNA synthetase family. In terms of assembly, monomer. Zn(2+) is required as a cofactor.

The protein resides in the cytoplasm. The catalysed reaction is tRNA(Cys) + L-cysteine + ATP = L-cysteinyl-tRNA(Cys) + AMP + diphosphate. This is Cysteine--tRNA ligase from Levilactobacillus brevis (strain ATCC 367 / BCRC 12310 / CIP 105137 / JCM 1170 / LMG 11437 / NCIMB 947 / NCTC 947) (Lactobacillus brevis).